Reading from the N-terminus, the 469-residue chain is Argininosuccinate lyase (469 aa).

The protein belongs to the lyase 1 family. Argininosuccinate lyase subfamily.

The protein localises to the cytoplasm. The catalysed reaction is 2-(N(omega)-L-arginino)succinate = fumarate + L-arginine. It participates in amino-acid biosynthesis; L-arginine biosynthesis; L-arginine from L-ornithine and carbamoyl phosphate: step 3/3. The polypeptide is Argininosuccinate lyase (Burkholderia orbicola (strain MC0-3)).